Here is a 263-residue protein sequence, read N- to C-terminus: Regulatory protein RecX (263 aa).

It belongs to the RecX family.

It is found in the cytoplasm. In terms of biological role, modulates RecA activity. The sequence is that of Regulatory protein RecX from Bacillus pumilus (strain SAFR-032).